A 217-amino-acid chain; its full sequence is GTP cyclohydrolase 1 (217 aa).

C109, H112, and C180 together coordinate Zn(2+).

It belongs to the GTP cyclohydrolase I family. Toroid-shaped homodecamer, composed of two pentamers of five dimers.

The catalysed reaction is GTP + H2O = 7,8-dihydroneopterin 3'-triphosphate + formate + H(+). It participates in cofactor biosynthesis; 7,8-dihydroneopterin triphosphate biosynthesis; 7,8-dihydroneopterin triphosphate from GTP: step 1/1. The polypeptide is GTP cyclohydrolase 1 (Vibrio cholerae serotype O1 (strain ATCC 39315 / El Tor Inaba N16961)).